The following is a 549-amino-acid chain: Probable protein kinase UbiB (549 aa).

Residues 123-501 enclose the Protein kinase domain; it reads DFDDTPLASA…QQKAHKSNYL (379 aa). Residues 129-137 and Lys-152 contribute to the ATP site; that span reads LASASISQV. Asp-287 acts as the Proton acceptor in catalysis. A run of 2 helical transmembrane segments spans residues 498-518 and 520-540; these read SNYLLITSAILVICGTILLNQ and ATLWPSYGSIGIGITLWVLGW.

It belongs to the ABC1 family. UbiB subfamily.

The protein resides in the cell inner membrane. It participates in cofactor biosynthesis; ubiquinone biosynthesis [regulation]. Its function is as follows. Is probably a protein kinase regulator of UbiI activity which is involved in aerobic coenzyme Q (ubiquinone) biosynthesis. This is Probable protein kinase UbiB from Shewanella pealeana (strain ATCC 700345 / ANG-SQ1).